Here is a 406-residue protein sequence, read N- to C-terminus: Cysteine desulfurase (406 aa).

Position 226 is an N6-(pyridoxal phosphate)lysine (lysine 226). Cysteine 364 functions as the Cysteine persulfide intermediate in the catalytic mechanism.

It belongs to the class-V pyridoxal-phosphate-dependent aminotransferase family. Csd subfamily. As to quaternary structure, homodimer. Interacts with SufE and the SufBCD complex composed of SufB, SufC and SufD. The interaction with SufE is required to mediate the direct transfer of the sulfur atom from the S-sulfanylcysteine. Requires pyridoxal 5'-phosphate as cofactor.

The protein localises to the cytoplasm. The enzyme catalyses (sulfur carrier)-H + L-cysteine = (sulfur carrier)-SH + L-alanine. It carries out the reaction L-selenocysteine + AH2 = hydrogenselenide + L-alanine + A + H(+). It participates in cofactor biosynthesis; iron-sulfur cluster biosynthesis. Functionally, cysteine desulfurases mobilize the sulfur from L-cysteine to yield L-alanine, an essential step in sulfur metabolism for biosynthesis of a variety of sulfur-containing biomolecules. Component of the suf operon, which is activated and required under specific conditions such as oxidative stress and iron limitation. Acts as a potent selenocysteine lyase in vitro, that mobilizes selenium from L-selenocysteine. Selenocysteine lyase activity is however unsure in vivo. The polypeptide is Cysteine desulfurase (Escherichia coli O17:K52:H18 (strain UMN026 / ExPEC)).